We begin with the raw amino-acid sequence, 462 residues long: Phosphoglycerate kinase, chloroplastic (462 aa).

The N-terminal 61 residues, M1–A61, are a transit peptide targeting the chloroplast. (2R)-3-phosphoglycerate is bound by residues A83, D84, N86, R101, S123, H124, G126, R127, R183, H215, and R216. An ADP-binding site is contributed by G261. G261 contacts CDP. AMP contacts are provided by K263 and K267. ATP is bound at residue K267. G285 is a binding site for ADP. G285 provides a ligand contact to CDP. Residues G286 and G358 each contribute to the AMP site. ATP contacts are provided by G286 and G358. 2 residues coordinate CDP: G383 and F388. Position 388 (F388) interacts with ADP. E389 is a binding site for AMP. E389, D420, and S421 together coordinate ATP. D420 contributes to the Mg(2+) binding site.

It belongs to the phosphoglycerate kinase family. In terms of assembly, monomer. Mg(2+) is required as a cofactor.

The protein resides in the plastid. It localises to the chloroplast. It catalyses the reaction (2R)-3-phosphoglycerate + ATP = (2R)-3-phospho-glyceroyl phosphate + ADP. It functions in the pathway carbohydrate biosynthesis; Calvin cycle. This chain is Phosphoglycerate kinase, chloroplastic (PGK), found in Volvox carteri (Green alga).